The primary structure comprises 712 residues: Dipeptidyl-peptidase 7 (712 aa).

A signal peptide spans 1 to 23 (MQMKLKSILLGAALLLGASGVAK). His89 (charge relay system) is an active-site residue. Residues 136-173 (TDKVEGQLKGITDEMERLRKAQEVCQELAKKENADENQ) adopt a coiled-coil conformation. Residues Asp225 and Ser648 each act as charge relay system in the active site.

It belongs to the peptidase S46 family.

Its subcellular location is the cell outer membrane. Its activity is regulated as follows. Is inhibited in vitro by typical serine protease inhibitors like diisopropyl fluorophosphate, Pefablock, and 3,4-dichloroisocoumarin, but not by typical cysteine class inhibitors such as E-64 or iododoacetic acid. Catalyzes the removal of dipeptides from the N-terminus of oligopeptides. Shows a broad specificity for both aliphatic and aromatic residues in the P1 position, with glycine or proline being not acceptable in this position. Most potently cleaves the synthetic substrate Met-Leu-methylcoumaryl-7-amide (Met-Leu-MCA), Leu-Arg-MCA and Lys-Ala-MCA to a lesser extent. Is likely involved in amino acid metabolism and bacterial growth of asaccharolytic P.gingivalis, that utilizes amino acids from extracellular proteinaceous nutrients as energy and carbon sources. This is Dipeptidyl-peptidase 7 from Porphyromonas gingivalis (strain ATCC 33277 / DSM 20709 / CIP 103683 / JCM 12257 / NCTC 11834 / 2561).